Here is a 328-residue protein sequence, read N- to C-terminus: Lateral signaling target 1 protein (328 aa).

Disordered regions lie at residues 56 to 78, 108 to 135, and 177 to 200; these read SSQDSGVLSSLSSSPQQRSGLRS, PTHYNSRKTSGPPPLMRTPSSGFSSASS, and PVQPSTSTSRNNVSQISGSSRLNG. Over residues 178–200 the composition is skewed to polar residues; sequence VQPSTSTSRNNVSQISGSSRLNG.

In terms of assembly, interacts with fbf-2; the interaction probably mediates the release of the C-terminal tail of fbf-2 from the RNA-binding domain, thereby altering its RNA-binding affinity.

Plays a role in germline stem cell maintenance, perhaps acting in concert with mRNA-binding factor fbf-2. May regulate fbf-2 by modulating RNA-binding and perhaps by competition with the intramolecular interaction between the fbf-2 RNA-binding domain and C-terminal tail. The polypeptide is Lateral signaling target 1 protein (Caenorhabditis elegans).